We begin with the raw amino-acid sequence, 441 residues long: Ribulose bisphosphate carboxylase large chain (441 aa).

K5 carries the post-translational modification N6,N6,N6-trimethyllysine. Substrate-binding residues include N114 and T164. The active-site Proton acceptor is the K166. K168 serves as a coordination point for substrate. Mg(2+) is bound by residues K192, D194, and E195. K192 carries the N6-carboxylysine modification. H285 acts as the Proton acceptor in catalysis. The substrate site is built by R286, H318, and S370.

Belongs to the RuBisCO large chain family. Type I subfamily. Heterohexadecamer of 8 large chains and 8 small chains; disulfide-linked. The disulfide link is formed within the large subunit homodimers. Mg(2+) serves as cofactor. In terms of processing, the disulfide bond which can form in the large chain dimeric partners within the hexadecamer appears to be associated with oxidative stress and protein turnover.

Its subcellular location is the plastid. It localises to the chloroplast. The catalysed reaction is 2 (2R)-3-phosphoglycerate + 2 H(+) = D-ribulose 1,5-bisphosphate + CO2 + H2O. It catalyses the reaction D-ribulose 1,5-bisphosphate + O2 = 2-phosphoglycolate + (2R)-3-phosphoglycerate + 2 H(+). Functionally, ruBisCO catalyzes two reactions: the carboxylation of D-ribulose 1,5-bisphosphate, the primary event in carbon dioxide fixation, as well as the oxidative fragmentation of the pentose substrate in the photorespiration process. Both reactions occur simultaneously and in competition at the same active site. The protein is Ribulose bisphosphate carboxylase large chain of Pellaea rotundifolia (Button fern).